A 132-amino-acid chain; its full sequence is 3'-dehydrocarminate deglycosidase beta subunit (132 aa).

This sequence belongs to the C-glycoside deglycosidase beta subunit family. Heterodimer composed of an alpha subunit (CarB) and a beta subunit (CarC). Mg(2+) is required as a cofactor.

It carries out the reaction 3'-dehydrocarminate + H(+) = kermesate + 1,5-anhydro-D-erythro-hex-1-en-3-ulose. Its activity is regulated as follows. Activity is strongly reduced in the presence of chelating agents. Functionally, carbon-carbon bond-cleaving enzyme which participates in a carminate degradation pathway. Cleaves the C-C bond in 3'-dehydrocarminate to form kermesate. Also shows weak activity with other C-glycosides, such as 3''-dehydropuerarin (3''-oxo-puerarin), 3''-dehydroisoorientin (3''-oxo-homoorientin) and 3'-dehydromangiferin (3'-oxo-mangiferin). The polypeptide is 3'-dehydrocarminate deglycosidase beta subunit (Microbacterium sp).